Consider the following 165-residue polypeptide: LOB domain-containing protein 3 (165 aa).

In terms of domain architecture, LOB spans 13–115 (SPCAGCKLLR…TQLAFAQAEL (103 aa)).

This sequence belongs to the LOB domain-containing protein family. Expressed in young shoots, roots, stems, leaves and flowers. At the bases of lateral organs formed from vegetative, inflorescence, and floral meristems.

It localises to the nucleus. In Arabidopsis thaliana (Mouse-ear cress), this protein is LOB domain-containing protein 3 (LBD3).